The primary structure comprises 425 residues: UPF0597 protein Moth_1414 (425 aa).

The protein belongs to the UPF0597 family.

This Moorella thermoacetica (strain ATCC 39073 / JCM 9320) protein is UPF0597 protein Moth_1414.